The sequence spans 442 residues: Thymidine phosphorylase (442 aa).

Belongs to the thymidine/pyrimidine-nucleoside phosphorylase family. Homodimer.

The catalysed reaction is thymidine + phosphate = 2-deoxy-alpha-D-ribose 1-phosphate + thymine. Its pathway is pyrimidine metabolism; dTMP biosynthesis via salvage pathway; dTMP from thymine: step 1/2. The enzymes which catalyze the reversible phosphorolysis of pyrimidine nucleosides are involved in the degradation of these compounds and in their utilization as carbon and energy sources, or in the rescue of pyrimidine bases for nucleotide synthesis. This chain is Thymidine phosphorylase, found in Pectobacterium atrosepticum (strain SCRI 1043 / ATCC BAA-672) (Erwinia carotovora subsp. atroseptica).